A 214-amino-acid chain; its full sequence is Outer-membrane lipoprotein LolB (214 aa).

An N-terminal signal peptide occupies residues 1–25; it reads MNNLKRLTKTIFSCFTLSALLLLAG. Cysteine 26 is lipidated: N-palmitoyl cysteine. Cysteine 26 carries S-diacylglycerol cysteine lipidation.

The protein belongs to the LolB family. As to quaternary structure, monomer.

It localises to the cell outer membrane. Plays a critical role in the incorporation of lipoproteins in the outer membrane after they are released by the LolA protein. The chain is Outer-membrane lipoprotein LolB from Shewanella baltica (strain OS155 / ATCC BAA-1091).